The sequence spans 320 residues: Malate dehydrogenase (320 aa).

NAD(+) contacts are provided by residues 10–15 (GSGMIG) and Asp34. Substrate contacts are provided by Arg83 and Arg89. NAD(+)-binding positions include Asn96 and 119–121 (ITN). Substrate is bound by residues Asn121 and Arg152. His176 acts as the Proton acceptor in catalysis.

Belongs to the LDH/MDH superfamily. MDH type 3 family.

It carries out the reaction (S)-malate + NAD(+) = oxaloacetate + NADH + H(+). Functionally, catalyzes the reversible oxidation of malate to oxaloacetate. The sequence is that of Malate dehydrogenase from Brucella anthropi (strain ATCC 49188 / DSM 6882 / CCUG 24695 / JCM 21032 / LMG 3331 / NBRC 15819 / NCTC 12168 / Alc 37) (Ochrobactrum anthropi).